Consider the following 335-residue polypeptide: UPF0353 protein MAV335 (335 aa).

2 helical membrane-spanning segments follow: residues 18-38 (WFFL…LMQL) and 67-87 (LPAI…AGPT). A VWFA domain is found at 98–295 (VVMLVIDVSQ…QELKSVYATL (198 aa)). A helical transmembrane segment spans residues 309–329 (SVGWVRLGALVLRLAADALLI).

The protein belongs to the UPF0353 family.

It localises to the cell membrane. The protein is UPF0353 protein MAV335 of Mycobacterium avium.